Consider the following 585-residue polypeptide: Glutathione S-transferase C-terminal domain-containing protein homolog (585 aa).

The GST C-terminal domain maps to 120 to 275 (LGFKGSCLLA…DKCARVLRDL (156 aa)).

This sequence belongs to the GSTCD family.

This is Glutathione S-transferase C-terminal domain-containing protein homolog from Drosophila melanogaster (Fruit fly).